A 467-amino-acid polypeptide reads, in one-letter code: Light-independent protochlorophyllide reductase subunit N (467 aa).

[4Fe-4S] cluster is bound by residues C22, C47, and C107.

It belongs to the BchN/ChlN family. Protochlorophyllide reductase is composed of three subunits; ChlL, ChlN and ChlB. Forms a heterotetramer of two ChlB and two ChlN subunits. [4Fe-4S] cluster serves as cofactor.

Its subcellular location is the plastid. It localises to the chloroplast. It carries out the reaction chlorophyllide a + oxidized 2[4Fe-4S]-[ferredoxin] + 2 ADP + 2 phosphate = protochlorophyllide a + reduced 2[4Fe-4S]-[ferredoxin] + 2 ATP + 2 H2O. It participates in porphyrin-containing compound metabolism; chlorophyll biosynthesis (light-independent). Component of the dark-operative protochlorophyllide reductase (DPOR) that uses Mg-ATP and reduced ferredoxin to reduce ring D of protochlorophyllide (Pchlide) to form chlorophyllide a (Chlide). This reaction is light-independent. The NB-protein (ChlN-ChlB) is the catalytic component of the complex. This Pinus thunbergii (Japanese black pine) protein is Light-independent protochlorophyllide reductase subunit N.